Here is a 69-residue protein sequence, read N- to C-terminus: Large ribosomal subunit protein bL28 (69 aa).

It belongs to the bacterial ribosomal protein bL28 family.

The polypeptide is Large ribosomal subunit protein bL28 (Nitratidesulfovibrio vulgaris (strain DSM 19637 / Miyazaki F) (Desulfovibrio vulgaris)).